Here is a 180-residue protein sequence, read N- to C-terminus: Large ribosomal subunit protein uL5 (180 aa).

Belongs to the universal ribosomal protein uL5 family. In terms of assembly, part of the 50S ribosomal subunit; part of the 5S rRNA/L5/L18/L25 subcomplex. Contacts the 5S rRNA and the P site tRNA. Forms a bridge to the 30S subunit in the 70S ribosome.

Its function is as follows. This is one of the proteins that bind and probably mediate the attachment of the 5S RNA into the large ribosomal subunit, where it forms part of the central protuberance. In the 70S ribosome it contacts protein S13 of the 30S subunit (bridge B1b), connecting the 2 subunits; this bridge is implicated in subunit movement. Contacts the P site tRNA; the 5S rRNA and some of its associated proteins might help stabilize positioning of ribosome-bound tRNAs. This Heliobacterium modesticaldum (strain ATCC 51547 / Ice1) protein is Large ribosomal subunit protein uL5.